The primary structure comprises 1972 residues: Myosin-11 (1972 aa).

Phosphoserine is present on residues serine 8, serine 23, and serine 40. Positions 31 to 81 constitute a Myosin N-terminal SH3-like domain; it reads AAKRLVWVPSEKQGFEAASIKEEKGDEVVVELVENGKKVTVGKDDIQKMNP. Residues 85 to 783 enclose the Myosin motor domain; that stretch reads SKVEDMAELT…VLAHLEEERD (699 aa). The residue at position 129 (lysine 129) is an N6,N6,N6-trimethyllysine. Residue 178–185 participates in ATP binding; it reads GESGAGKT. Actin-binding regions lie at residues 661–683 and 762–776; these read LGKL…IPNH and RIGQ…GVLA. One can recognise an IQ domain in the interval 786 to 815; sequence ITDVIMAFQAMCRGYLARKAFAKRQQQLTA. Positions 844 to 1934 form a coiled coil; sequence LLQVTRQEEE…KSKLRRGNET (1091 aa). The interval 858–882 is disordered; it reads EDELQKTKERQQKAENELKELEQKH. Threonine 1177 bears the Phosphothreonine mark. A phosphoserine mark is found at serine 1684 and serine 1722. 2 disordered regions span residues 1744–1800 and 1866–1972; these read ELEE…LRSK and EQYK…KASE. Positions 1762–1788 are enriched in polar residues; the sequence is ATQQAEQLSNELATERSTAQKNESARQ. Basic and acidic residues-rich tracts occupy residues 1789 to 1800 and 1866 to 1876; these read QLERQNKELRSK and EQYKEQAEKGN. Residues 1935-1972 are C-terminal; sequence SFVPSRRSGGRRVIENADGSEEETDTRDADFNGTKASE. At serine 1954 the chain carries Phosphoserine. Threonine 1958 is subject to Phosphothreonine. Serine 1971 bears the Phosphoserine mark.

Belongs to the TRAFAC class myosin-kinesin ATPase superfamily. Myosin family. As to quaternary structure, muscle myosin is a hexameric protein that consists of 2 heavy chain subunits (MHC), 2 alkali light chain subunits (MLC) and 2 regulatory light chain subunits (MLC-2). As to expression, smooth muscle; expressed in the umbilical artery, bladder, esophagus and trachea. Isoform 1 is mostly found in slowly contracting tonic muscles.

It is found in the melanosome. Its function is as follows. Muscle contraction. The polypeptide is Myosin-11 (MYH11) (Homo sapiens (Human)).